A 40-amino-acid chain; its full sequence is Cell division inhibitor MciZ (40 aa).

As to quaternary structure, interacts with FtsZ. Binds to the C-terminal polymerization interface of FtsZ. Binds to FtsZ filaments.

Highly effective in inhibiting polymerization at low and intermediate concentrations of GTP and only partially effective at high GTP concentrations. In terms of biological role, blocks Z-ring formation in the mother cell during sporulation by inhibiting the polymerization of FtsZ. Binds to the minus end of FtsZ and functions as a filament-capping protein. At high concentrations, is capable of both capping and sequestration of FtsZ. Decreases the GTPase activity of FtsZ. In Bacillus subtilis (strain 168), this protein is Cell division inhibitor MciZ.